The sequence spans 937 residues: MASNNVAQFATELKMPADVLLTQLRDAGVEKSSTSDELSKADKDKLLDHLRRAHGVAPDGEKKKITLTRKETTEIKQADATGKSRTIQVEVRKKRTFVKRDESTPEEAPVKAAAPVIDEAEIERRAEEARRQAELIARQEADLREKQERLAKLEAEKEAQAKALKQAEQAEAEAQKADAAKPVEAKADESAQEEKKRVAAEESKKKAAQLAKDAAKEASEKAVATEAARKAVADEVAQIKAMMNAPRRAIKAPEPAAPVAAKPAEGTLHKPADKKAGEKKDEKKPAVTADKKSIKSANVSSTWQDDAKKRGAGIKTRGNTGGGRDGWRAGPKGRRPSHHDDRESNFQAPTEAVVKDVHVPETITVAELAHKMSVKASEVIKHLMKLGQMCTINQVLDQETAMILVEEMGHTAHAAKLDDPEALLEQGEEHADIEALPRAPVVTVMGHVDHGKTSLLDYIRRAKVASGEAGGITQHIGAYHVETPRGMITFLDTPGHEAFTAMRARGAKATDIVILVVAADDGVMPQTKEAIAHAKAAGVPLVVAINKIDKPGANMDRVKQELIAEQVVPEEYGGDSPFVPVSAKTGEGIDALLEQVLLQAEVLELKAPVDAPARGLVVEAKLDKGRGPVATILVQSGTLKRGDVVLAGSAYGRVRAMLDENGKSITEAGPSIPVEIQGLTEVPNAGEEVMVMADERKAREIGLFRQGKFRDVKLAKQQAAKLENMFENMGEGEVKNLPMIIKTDVQGSQEALVGSLQKLSTSEVRVQVVHAAVGGISESDVNLAVASKAVIIGFNTRADASARKLAEANGVDIRYYNIIYDAVDEIKAAMSGMLAPEKREQALGLVEIRQVILVSKVGAIAGCYVLEGVAKRGSSVRLLRDNVVVWTGELDSLKRFKDDVKEVKAGFECGLTLKNFNDIKEGDQLEVFEVQEIARTL.

Disordered stretches follow at residues Lys-157–Lys-230 and Ile-250–Phe-346. Basic and acidic residues predominate over residues Glu-173–Lys-205. A compositionally biased stretch (low complexity) spans Ala-252 to Glu-265. Positions Thr-267–Ser-293 are enriched in basic and acidic residues. Over residues Lys-295–Gln-304 the composition is skewed to polar residues. In terms of domain architecture, tr-type G spans Pro-437–Lys-606. The segment at Gly-446–Thr-453 is G1. GTP is bound at residue Gly-446–Thr-453. The tract at residues Gly-471 to His-475 is G2. The segment at Asp-492–Gly-495 is G3. GTP is bound by residues Asp-492–His-496 and Asn-546–Asp-549. The interval Asn-546–Asp-549 is G4. The segment at Ser-582–Lys-584 is G5.

This sequence belongs to the TRAFAC class translation factor GTPase superfamily. Classic translation factor GTPase family. IF-2 subfamily.

It is found in the cytoplasm. Functionally, one of the essential components for the initiation of protein synthesis. Protects formylmethionyl-tRNA from spontaneous hydrolysis and promotes its binding to the 30S ribosomal subunits. Also involved in the hydrolysis of GTP during the formation of the 70S ribosomal complex. This Janthinobacterium sp. (strain Marseille) (Minibacterium massiliensis) protein is Translation initiation factor IF-2.